An 865-amino-acid chain; its full sequence is Leucine--tRNA ligase (865 aa).

The short motif at 58–68 (PYPSGNLHMGH) is the 'HIGH' region element. The 'KMSKS' region motif lies at 629 to 633 (KMSKS). Residue K632 coordinates ATP.

This sequence belongs to the class-I aminoacyl-tRNA synthetase family.

It is found in the cytoplasm. It carries out the reaction tRNA(Leu) + L-leucine + ATP = L-leucyl-tRNA(Leu) + AMP + diphosphate. The chain is Leucine--tRNA ligase from Synechococcus elongatus (strain ATCC 33912 / PCC 7942 / FACHB-805) (Anacystis nidulans R2).